The sequence spans 289 residues: Elongation factor Ts (289 aa).

The involved in Mg(2+) ion dislocation from EF-Tu stretch occupies residues 82–85; it reads TDFL.

It belongs to the EF-Ts family.

It localises to the cytoplasm. Its function is as follows. Associates with the EF-Tu.GDP complex and induces the exchange of GDP to GTP. It remains bound to the aminoacyl-tRNA.EF-Tu.GTP complex up to the GTP hydrolysis stage on the ribosome. The polypeptide is Elongation factor Ts (Pseudomonas paraeruginosa (strain DSM 24068 / PA7) (Pseudomonas aeruginosa (strain PA7))).